We begin with the raw amino-acid sequence, 462 residues long: ATP synthase subunit beta (462 aa).

151–158 contacts ATP; that stretch reads GGAGVGKT.

The protein belongs to the ATPase alpha/beta chains family. In terms of assembly, F-type ATPases have 2 components, CF(1) - the catalytic core - and CF(0) - the membrane proton channel. CF(1) has five subunits: alpha(3), beta(3), gamma(1), delta(1), epsilon(1). CF(0) has three main subunits: a(1), b(2) and c(9-12). The alpha and beta chains form an alternating ring which encloses part of the gamma chain. CF(1) is attached to CF(0) by a central stalk formed by the gamma and epsilon chains, while a peripheral stalk is formed by the delta and b chains.

Its subcellular location is the cell inner membrane. It catalyses the reaction ATP + H2O + 4 H(+)(in) = ADP + phosphate + 5 H(+)(out). Produces ATP from ADP in the presence of a proton gradient across the membrane. The catalytic sites are hosted primarily by the beta subunits. This is ATP synthase subunit beta from Chlorobium limicola.